The following is a 114-amino-acid chain: uncharacterized protein (114 aa).

Residue G2 is the site of N-myristoyl glycine; by host attachment. A run of 2 helical transmembrane segments spans residues 11-31 and 44-64; these read FGLILVGAIIFTASYLWKDLL and GLMWRSIYTILVTVILVLVAI. Positions 73-114 are disordered; it reads VNKDSKDPKDKSIEFDDSPIRDGSSGTPDNSNEPTDLSVETS. A compositionally biased stretch (basic and acidic residues) spans 75–92; sequence KDSKDPKDKSIEFDDSPI. Positions 96-114 are enriched in polar residues; it reads SSGTPDNSNEPTDLSVETS.

The protein resides in the membrane. This is an uncharacterized protein from Acanthamoeba polyphaga (Amoeba).